We begin with the raw amino-acid sequence, 162 residues long: Disulfide bond formation protein B (162 aa).

Topologically, residues 1-8 are cytoplasmic; sequence MTPLFRKA. Residues 9 to 25 traverse the membrane as a helical segment; that stretch reads VWLLFAVSVCAFAGSLA. The Periplasmic segment spans residues 26 to 43; it reads AQYVLGMEPCVLCISQRL. A disulfide bond links cysteine 35 and cysteine 38. A helical membrane pass occupies residues 44–60; the sequence is CVLATALCAAVVLACKP. The Cytoplasmic segment spans residues 61–67; it reads KGRVGGL. A helical transmembrane segment spans residues 68–85; it reads SGAVFISIPAVTGISVAA. Residues 86–141 lie on the Periplasmic side of the membrane; that stretch reads YQLWLQSLPPGAAPSCGAPWTFRLKGWPLFDWFEPVVRGFGNCAEPDYLLGVALPV. The cysteines at positions 101 and 128 are disulfide-linked. The helical transmembrane segment at 142 to 160 threads the bilayer; that stretch reads WSAAYFLAVVLTVWWAWAR. Over 161–162 the chain is Cytoplasmic; that stretch reads AK.

Belongs to the DsbB family.

The protein localises to the cell inner membrane. In terms of biological role, required for disulfide bond formation in some periplasmic proteins. Acts by oxidizing the DsbA protein. This is Disulfide bond formation protein B from Neisseria gonorrhoeae (strain ATCC 700825 / FA 1090).